The following is a 278-amino-acid chain: HTH-type transcriptional activator RhaS (278 aa).

The HTH araC/xylS-type domain maps to 174–272 (NLLLAWLEDH…NWSPRDIRQG (99 aa)). 2 DNA-binding regions (H-T-H motif) span residues 191 to 212 (DAVA…KQQT) and 239 to 262 (VTDI…RREF).

As to quaternary structure, binds DNA as a dimer.

Its subcellular location is the cytoplasm. Activates expression of the rhaBAD and rhaT operons. The protein is HTH-type transcriptional activator RhaS of Escherichia coli O127:H6 (strain E2348/69 / EPEC).